The sequence spans 403 residues: Phosphopentomutase (403 aa).

Residues Asp13, Asp298, His303, Asp339, His340, and His351 each coordinate Mn(2+).

It belongs to the phosphopentomutase family. Requires Mn(2+) as cofactor.

It is found in the cytoplasm. It catalyses the reaction 2-deoxy-alpha-D-ribose 1-phosphate = 2-deoxy-D-ribose 5-phosphate. It carries out the reaction alpha-D-ribose 1-phosphate = D-ribose 5-phosphate. It functions in the pathway carbohydrate degradation; 2-deoxy-D-ribose 1-phosphate degradation; D-glyceraldehyde 3-phosphate and acetaldehyde from 2-deoxy-alpha-D-ribose 1-phosphate: step 1/2. Functionally, isomerase that catalyzes the conversion of deoxy-ribose 1-phosphate (dRib-1-P) and ribose 1-phosphate (Rib-1-P) to deoxy-ribose 5-phosphate (dRib-5-P) and ribose 5-phosphate (Rib-5-P), respectively. The chain is Phosphopentomutase from Streptococcus pyogenes serotype M5 (strain Manfredo).